The following is a 3681-amino-acid chain: MKLRRRRASEVPSKIKSFINSVTSVPLELIHEPLACFRWEFDKGDFHHWVDLFNYFDTFFEKHVQVRKDLHIEENFEESDPPFPKDAVLQVLRVIRVVLENCTNKHFYSSYEQHLSLLLASTDADVVEACLQTLAAFLKRQIGKYSIRDASLNSKLFSLAQGWGGKEEGLGLTSCAAENSCDQVSLQLGRTLHFEFYPSDESPSELPGGLQVIHVPDVSICAESDLELLNKLVIDHNVPPSLRFALLTRMRFARAFSSLATRQQFTCIRLYAFVVLVQASGDTENVVSFFNGEPEFVNELVTLVSYEDTVPEKIRILCLLSLVALSQDRTRQPTVLTAVTSGGHRGLLSGLMQKAIDSVVCITSKWSLAFAEALLSLVTVLVSSSSGCSAMREAGLIPTLVPLIKDTDPQHLHLVSAAVHILEAFMDYSNPAAALFRDLGGLDDTIFRLKLEVSRTEDDVKEKNCSSDSNGPDTEQLPYSEALISYHRRLLLKALLRAISLGTYAPGNTNLYGSEESLLPECLCIIFRRAKDFGGGVFSLAATVMSDLIHKDPTCFNALDSAGLTSTFLDAISDEVICSAEAITCIPQCLDALCLNNSGLQAVKDRNALRCFVKIFTSPSYLRALTGDTPGSLSSGLDELLRHQSSLRTYGVDMFIEILNSMLIIGSGMEATTSKSADVPTSAAPVPMEIDVDEKSLAVSDEAEPSSDTSPANIELFLPDCVCNVARLFETVLQNAEVCSLFVEKKGIDAVLQLFSLPLMPLSTSLGQSFSVAFKNFSPQHSAGLARIVCSYLREHLKKTKILLVSIEGTQLLKLESAIQTKILRSLSCLEGMLSLSNFLLKGSASVISELSAADADVLKELGITYKQTIWQMALCNDTKEDEKKSVDRGSDNSVSASSSTAERESDEDSSNALAVRYTNPVSIRSSSSQSIWGGDREFLSIVRSGEGIHGRTRHAIARMRGGRTRRHLESFNFDSEIPADLPVTSSSHELKKKSTEVLIAEILNKLNCTLRFFFTALVKGFTSANRRRIDGASLSSASKTLGTALAKVFLEALNFDGYGAAAGHEKSLSVKCRYLGKVVDDITFLSFDTRRRVCFTAMVNSFYVHGTFKELLTTFEATSQLLWTVPFSIPASSTENEKPGERNIWSHSKWLVDTLQNYCRALDYFVNSTYLLSPTSQTQLLVQPASVGLSIGLFPVPREPETFVRNLQSQVLDVILPIWNHPMFPDCNPNFVASVTSLVTHIYSGVVDARENRSGVTRGINQRALPLQLDESIVGMIVEMGFSRSRAEIALRRVGTNSVEMAMDWLFTNPEQPVQEDDELAQALALSLGNSSETPKLEDTEKPVDVPQEEAEPKEPPVDEVIAASVKLFQSDDSMAFPLMDLFVTLCNRNKGEDRPKIVSYLIQQLKLVQLDFSKDTGALTMIPHILALVLSEDDNTREIAAQDGIVTVAIGILTDFNLKSESETEILAPKCISALLLVLSMMLQAQTKLSSEYVEGNQGGSLVPSDSPQDSTAALKDALSSDVAKGESNQALELIFGKSTGYLTMEEGHKALLIACGLIKQHVPAMIMQAVLQLCARLTKSHALAIQFLENGGLSSLFNLPKKCCFPGYDTVASVIVRHLVEDPQTLQIAMETEIRQTLSGKRHIGRVLPRTFLTTMAPVISRDPVVFMKAVASTCQLESSGGRDFVILSKEKEKPKVSGSEHGFSLNEPLGISENKLHDVSGKCSKSHRRVPANFIQVIDQLIDLVLSFPRVKRQEDGETNLISMEVDEPTTKVKGKSKVGEPEKASSSRVGEPEKAEIPEKSEELARVTFILKLLSDIVLMYSHGTSVILRRDTEISQLRGSNLPDDSPGNGGLIYHVIHRLLPISLEKFVGPEEWKEKLSEKASWFLVVLCSRSNEGRKRIINELSRVLSVFASLGRSSSKSVLLPDKRVLAFANLVYSILTKNSSSSSSNFPGCGCSPDVAKSMMDGGTIQCLTSILHVIDLDHPDAPKLVTLILKSLETLTRAANAAEQLKSEVPNEKKNRDSDERHDSHGNSTETEADELNQNNSSLQQVTDAAGNGQEQAQVSSQSAGERGSSQTQAMPQDMRIEGDETILPEPIQMDFMREEIEGDQIEMSFHVENRADDDVDDDMGDEGEDDEGDDEDADLVEDGAGVMSLAGTDVEDPEDTGLGDEYNDDMVDEDDDDFHENRVIEVRWREALDGLDHFQILGRSGGGNGFIDDITAEPFEGVNVDDLFALRRPLGFERRRQTGRSSLDRSGSEVHGFQHPLFSRPSQTGNTASVSASAGSISRHSEAGSYDVAQFYMFDTPVLPFDQVPVDPFSARLAGGGAPPPLTDYSVVGMDSSRRGVGDSRWTDIGHPQPSSLSASIAQLIEEHFISNLRASAPVNTVVERETNTTEIQEQLHPDVPPSVGSETVLGDGNEGGQQSEERELLNNNENVNNPPDVMAESFAQGQANLASPVSQDTGESLQQLEVMQPLPLNSTPNEIDRMEVGEGDGAPIDQVDHEAVHLISTAQGQPDTSSIQNVSVTAIAPPVDDPDSNFQPSVDVDMSSDGAEGNQSVQPSPLDGDNNELSSMEATENVRNDEQVEEGSLDGRAPEVNAIDPTFLEALPEDLRAEVLASQQAQSVQPPTYEPPPVDDIDPEFLAALPPDIQTEVLAQQRAQRMVQQSQGQAVDMDNASIIATLPADLREEVLLTSSEAVLAALPSPLLAEAQMLRDRAMSHYQARSSVFGSSHRLNNRRNGLGYNRLTGMDRGVGVTIGQRAVSSSADGLKVKEIEGDPLVNADALKSLIRLLRLAQPLGKGLLQRLLLNLCAHSFTRANLVQLLLDMIRPEMETSPSELAITNPQRLYGCQSNVVYGRSQLLNGLPPLVFRRVLEVLTYLATNHSAVADMLFYFDSSLLSQLSSRKGKEKVTHVTDSRDLEIPLVVFLKLLNRPQLLQSTSHLGLVMGLLQVVVYTAASRIEGWSPSSGVPEKLENKPVGEEASSETRKDAESELVGEADLSVARRKNCAEIYNIFLQLPQSDLCNLCILLGYEGLSDKIYSLAGEVLKKLAAVDVAHRKFFTKELSELASSLSSSTVRELATLSSKQKMSRSTGSMAGASILRVLQVLSSLTSPIDESNVGTERETEQEEQNIMQRLNVALEPLWHELSQCISMTELQLDHTAAASNINPGDHVLGISPTSSLSPGTQRLLPLIEAFFVLCEKIQTPSMLQQDTNVTAGEVKESSAHGSSSKTSVDSQKKTDGSVTFSKFAEKHRRLLNSFIRQNPSLLEKSLSMMLKAPRLIDFDNKKAYFRSRIRHQHDQHISGPLRISVRRAYVLEDSYNQLRMRSPQDLKGRLNVQFQGEEGIDAGGLTREWYQLLSRVIFDKGALLFTTVGNDATFQPNPNSVYQTEHLSYFKFVGRMVAKALFDGQLLDVYFTRSFYKHILGVKVTYHDIEAVDPDYYKNLKWLLENDVSDILDLTFSMDADEEKHILYEKTEVTDYELKPGGRNIRVTEETKHEYVDLVAGHILTNAIRPQINAFLEGFNELIPRELVSIFNDKELELLISGLPEIDFDDLKANTEYTSYTAGSPVIHWFWEVVKAFSKEDMARFLQFVTGTSKVPLEGFKALQGISGPQRLQIHKAYGAPERLPSAHTCFNQLDLPEYQSKEQLQERLLLAIHEASEGFGFA.

Residues 882–891 are compositionally biased toward basic and acidic residues; sequence DEKKSVDRGS. The segment at 882 to 912 is disordered; the sequence is DEKKSVDRGSDNSVSASSSTAERESDEDSSN. Residues 892 to 901 show a composition bias toward low complexity; the sequence is DNSVSASSST. The region spanning 1269–1310 is the UBA domain; the sequence is QLDESIVGMIVEMGFSRSRAEIALRRVGTNSVEMAMDWLFTN. Positions 1316–1335 constitute a UIM domain; the sequence is QEDDELAQALALSLGNSSET. Disordered stretches follow at residues 1332–1358, 1768–1802, 2015–2094, 2125–2151, 2253–2287, 2401–2435, 2483–2505, 2537–2606, 2975–3003, and 3228–3254; these read SSETPKLEDTEKPVDVPQEEAEPKEPP, MEVDEPTTKVKGKSKVGEPEKASSSRVGEPEKAEI, EQLK…MRIE, ENRADDDVDDDMGDEGEDDEGDDEDAD, RQTGRSSLDRSGSEVHGFQHPLFSRPSQTGNTASV, NTTEIQEQLHPDVPPSVGSETVLGDGNEGGQQSEE, PLPLNSTPNEIDRMEVGEGDGAP, IAPP…APEV, SPSSGVPEKLENKPVGEEASSETRKDAES, and TAGEVKESSAHGSSSKTSVDSQKKTDG. Composition is skewed to basic and acidic residues over residues 1336–1345, 1782–1802, and 2017–2037; these read PKLEDTEKPV, KVGEPEKASSSRVGEPEKAEI, and LKSEVPNEKKNRDSDERHDSH. A compositionally biased stretch (polar residues) spans 2038–2087; the sequence is GNSTETEADELNQNNSSLQQVTDAAGNGQEQAQVSSQSAGERGSSQTQAM. Over residues 2130–2151 the composition is skewed to acidic residues; sequence DDVDDDMGDEGEDDEGDDEDAD. A compositionally biased stretch (basic and acidic residues) spans 2253-2265; sequence RQTGRSSLDRSGS. Polar residues predominate over residues 2277–2287; that stretch reads RPSQTGNTASV. At serine 2598 the chain carries Phosphoserine. Residues 2982–3002 show a composition bias toward basic and acidic residues; sequence EKLENKPVGEEASSETRKDAE. A compositionally biased stretch (polar residues) spans 3237–3247; it reads AHGSSSKTSVD. Residues 3340–3681 enclose the HECT domain; the sequence is SPQDLKGRLN…HEASEGFGFA (342 aa). Cysteine 3648 (glycyl thioester intermediate) is an active-site residue.

Belongs to the UPL family. TOM1/PTR1 subfamily. In terms of tissue distribution, widely expressed. Expressed in root, stem, cauline and rosette leaf, seedling and flower (at protein level).

The catalysed reaction is S-ubiquitinyl-[E2 ubiquitin-conjugating enzyme]-L-cysteine + [acceptor protein]-L-lysine = [E2 ubiquitin-conjugating enzyme]-L-cysteine + N(6)-ubiquitinyl-[acceptor protein]-L-lysine.. It functions in the pathway protein modification; protein ubiquitination. Functionally, probable E3 ubiquitin-protein ligase which mediates ubiquitination and subsequent proteasomal degradation of target proteins. This chain is E3 ubiquitin-protein ligase UPL1 (UPL1), found in Arabidopsis thaliana (Mouse-ear cress).